We begin with the raw amino-acid sequence, 1112 residues long: Zinc finger protein 654 (1112 aa).

Residues 482–514 are disordered; it reads PSSSLKKRVDQQSVEEDQSTGETDPDDASVVQP. The span at 494–508 shows a compositional bias: acidic residues; the sequence is SVEEDQSTGETDPDD. 5 C2H2-type zinc fingers span residues 566-588, 738-763, 779-801, 807-831, and 836-860; these read FACV…LKNH, FKCP…RTVH, GKCK…LNRH, YFCL…TKSH, and AQCS…EAQH. Disordered regions lie at residues 885–906 and 997–1018; these read FSNE…KYST and VESQ…NLTS. Polar residues-rich tracts occupy residues 886-899 and 1002-1018; these read SNEN…VSTS and HSAL…NLTS. 2 positions are modified to phosphoserine: serine 1107 and serine 1111.

The protein belongs to the krueppel C2H2-type zinc-finger protein family.

The protein resides in the nucleus. In terms of biological role, may be involved in transcriptional regulation. In Mus musculus (Mouse), this protein is Zinc finger protein 654.